The following is a 216-amino-acid chain: Cytochrome c biogenesis ATP-binding export protein CcmA (216 aa).

An ABC transporter domain is found at 5-216 (ISVDTLLSAS…RKIRLDYRFV (212 aa)). ATP is bound at residue 43–50 (GPNGAGKT).

The protein belongs to the ABC transporter superfamily. CcmA exporter (TC 3.A.1.107) family. The complex is composed of two ATP-binding proteins (CcmA) and two transmembrane proteins (CcmB).

The protein localises to the cell inner membrane. The enzyme catalyses heme b(in) + ATP + H2O = heme b(out) + ADP + phosphate + H(+). In terms of biological role, part of the ABC transporter complex CcmAB involved in the biogenesis of c-type cytochromes; once thought to export heme, this seems not to be the case, but its exact role is uncertain. Responsible for energy coupling to the transport system. This is Cytochrome c biogenesis ATP-binding export protein CcmA from Shewanella oneidensis (strain ATCC 700550 / JCM 31522 / CIP 106686 / LMG 19005 / NCIMB 14063 / MR-1).